The primary structure comprises 404 residues: Alkane 1-monooxygenase 1 (404 aa).

A run of 4 helical transmembrane segments spans residues 25-45, 47-67, 94-114, and 119-139; these read HLWI…YLVS, TGWS…VPLI, VLTY…AWWV, and IGVF…GLAL. Fe cation contacts are provided by H143 and H147. The chain crosses the membrane as a helical span at residues 151–171; sequence TFDRWMAKLVLAVVGYGHFFI. The Fe cation site is built by H173, H177, and H178. The helical transmembrane segment at 241-261 threads the bilayer; that stretch reads VVLYAALLAFFGPLMLIFLPI. 3 residues coordinate Fe cation: H317, H320, and H321.

Belongs to the fatty acid desaturase type 1 family. AlkB subfamily. Fe(3+) is required as a cofactor.

The protein resides in the cell inner membrane. The enzyme catalyses octane + 2 reduced [rubredoxin] + O2 + 2 H(+) = 2 oxidized [rubredoxin] + octan-1-ol + H2O. Its pathway is hydrocarbon metabolism; alkane degradation. Functionally, catalyzes the hydroxylation of n-alkanes and fatty acids in the presence of a NADH-rubredoxin reductase and rubredoxin. It preferably hydroxylases C5-C12 hydrocarbons. The polypeptide is Alkane 1-monooxygenase 1 (alkB1) (Alcanivorax borkumensis (strain ATCC 700651 / DSM 11573 / NCIMB 13689 / SK2)).